Consider the following 124-residue polypeptide: Large ribosomal subunit protein bL21 (124 aa).

A disordered region spans residues 105–124 (NAPSIGPRVRKAKPAAEAAE).

This sequence belongs to the bacterial ribosomal protein bL21 family. As to quaternary structure, part of the 50S ribosomal subunit. Contacts protein L20.

In terms of biological role, this protein binds to 23S rRNA in the presence of protein L20. This chain is Large ribosomal subunit protein bL21, found in Rhodopseudomonas palustris (strain BisA53).